Consider the following 246-residue polypeptide: Vacuolar iron transporter 2 (246 aa).

The Cytoplasmic portion of the chain corresponds to 1–32 (MVKEFVQDEEKQRLLLDEHTEKHFTAGEVVRD). The helical transmembrane segment at 33 to 53 (IIIGVSDGLTVPFALAAGLSG) threads the bilayer. The Vacuolar segment spans residues 54–58 (ANAPS). The helical transmembrane segment at 59–79 (ALVLTAGLAEVAAGAISMGLG) threads the bilayer. The Cytoplasmic segment spans residues 80–164 (GYLAAKSDAD…PEPRRALMSA (85 aa)). Residues 86 to 161 (SDADHYHREL…LEKPEPRRAL (76 aa)) are cytoplasmic metal binding domain (MBD). Residues E98, E101, E109, E112, M145, and E149 each contribute to the Fe cation site. A helical transmembrane segment spans residues 165–185 (GTIALAYVVGGLVPLLPYMFV). At 186 to 190 (PTADR) the chain is on the vacuolar side. The chain crosses the membrane as a helical span at residues 191 to 211 (AMATSVVVTLAALLFFGYVKG). Residues 212–218 (RFTGNRP) lie on the Cytoplasmic side of the membrane. A helical membrane pass occupies residues 219–239 (FISAFQTAVIGALASAAAFGM). Over 240 to 246 (AKAVQSI) the chain is Vacuolar.

This sequence belongs to the CCC1 family. As to quaternary structure, homodimer. The dimeric interaction is mediated by both the transmembrane domains (TMDs) and the cytoplasmic metal binding domain (MBD). Expressed in leaf sheaths and at lower level in leaf blades.

The protein resides in the vacuole membrane. It catalyses the reaction Fe(2+)(in) = Fe(2+)(out). Vacuolar iron transporter involved in the transfer of iron ions from the cytosol to the vacuole for intracellular iron storage. Vacuolar iron storage is required for seed embryo and seedling development. May be involved in the regulation of iron translocation between flag leaves and seeds. Can transport zinc ions from the cytosol to the vacuole. This chain is Vacuolar iron transporter 2, found in Oryza sativa subsp. japonica (Rice).